A 448-amino-acid polypeptide reads, in one-letter code: Iroquois-class homeodomain protein irx-3 (448 aa).

The homeobox; TALE-type DNA-binding region spans 108-170; that stretch reads DPSRPKNATR…NARRRLKKEN (63 aa). The tract at residues 171 to 247 is disordered; it reads KMTWAPRSRT…EVSDGFEDLN (77 aa). Residues 195–222 show a composition bias toward acidic residues; sequence KHEDEEEIDLENIDTEDIESKEDLDDPD. The segment covering 223 to 237 has biased composition (basic and acidic residues); that stretch reads TDIHSDSKTDTRSDS. Over residues 238-247 the composition is skewed to acidic residues; the sequence is EVSDGFEDLN.

The protein belongs to the TALE/IRO homeobox family. As to expression, primarily expressed in the developing central nervous system (CNS). At gastrula stage, expressed in both the superficial and deep layers of the presumptive neural plate with expression spreading to the prospective hindbrain, spinal cord and midbrain-hindbrain junction as neurulation proceeds. Not expressed in the anterior neural plate and CNS expression in the tadpole excludes the forebrain. Outside of the CNS, expressed around the closing blastopore at early gastrula stages and as gastrulation proceeds, expression switches to the anterior lateral plate mesoderm. In tadpoles, expressed in the ectodermal layer of the branchial arches, and in the otic vesicle. Also expressed in specific and overlapping dynamic patterns with irx1 and irx2 during pronephric kidney development. Renal expression begins before segment-specific terminal differentiation in the pronephric anlage at mid-neurula stage, and is later found in proximal tubule PT3 as well as intermediate tubule segments IT1 and IT2, with expression in the kidney being maintained through to the tadpole stage.

Its subcellular location is the nucleus. Functionally, acts partially redundantly with other irx members in neural patterning. Required for formation of the posterior forebrain, midbrain, hindbrain, and to a lesser extent, spinal cord. Both up-regulates and down-regulates gene expression during neural development. Acts early in neural plate development to induce proneural gene expression and specify a neural precursor state. Also up-regulates repressors that prevent neuronal differentiation. Required during at least two stages of pronephros kidney development; during neurula stages, maintains transcription of key renal genes to define the size and identity of the pronephric anlage, probably in part through regulation of bmp-signaling. Subsequently required for proper formation of the intermediate tubule segment of the pronephros. This chain is Iroquois-class homeodomain protein irx-3 (irx3), found in Xenopus laevis (African clawed frog).